The primary structure comprises 232 residues: U2 small nuclear ribonucleoprotein B'' (232 aa).

Residues 10–89 (QTVYLRNLNE…KRMRVQYAKT (80 aa)) form the RRM 1 domain. A disordered region spans residues 90 to 159 (RSDCLATEDG…QEPPAPPNNI (70 aa)). The segment covering 108–123 (KKQEEKAAEKKRRAEE) has biased composition (basic and acidic residues). Residues 127 to 151 (SGPNAAAQSNGTGYQASRLGKTSQE) show a composition bias toward polar residues. Positions 158-232 (NILFIQNLPA…NPMAISYAKK (75 aa)) constitute an RRM 2 domain.

The protein belongs to the RRM U1 A/B'' family. In terms of assembly, component of the spliceosome where it is associated with snRNP U2.

It localises to the nucleus. It is found in the cajal body. Its subcellular location is the nucleoplasm. The protein resides in the cytoplasm. In terms of biological role, involved in nuclear pre-mRNA splicing. This is U2 small nuclear ribonucleoprotein B'' from Oryza sativa subsp. japonica (Rice).